The chain runs to 1130 residues: MHC class II transactivator (1130 aa).

The interval 94–132 (AYANIAELDQYVFQDSQLEGLSKDIFKHIGPDEVIGESM) is required for acetyltransferase activity. The tract at residues 269 to 303 (PSGFTVHGLPTSPDRPGSTSPFAPSATDLPSMPEP) is disordered. The region spanning 414–724 (RVIAVLGKAG…CFLGALWLAL (311 aa)) is the NACHT domain. Residue 420-427 (GKAGQGKS) participates in GTP binding. 4 LRR repeats span residues 985 to 1008 (SLQH…SQLS), 1016 to 1037 (SLET…KLAE), 1045 to 1066 (SLLR…SLAR), and 1073 to 1093 (SLRV…QQLA).

Interacts with ZXDA and ZXDC. Interacts with PML (isoform PML-2). Interacts with TAF7; interaction inhibits CIITA acetyltransferase activity, thereby repressing transcription. Post-translationally, autophosphorylated, affecting interaction with TAF7.

The protein localises to the nucleus. Its subcellular location is the PML body. The catalysed reaction is L-seryl-[protein] + ATP = O-phospho-L-seryl-[protein] + ADP + H(+). The enzyme catalyses L-threonyl-[protein] + ATP = O-phospho-L-threonyl-[protein] + ADP + H(+). Functionally, essential for transcriptional activity of the HLA class II promoter; activation is via the proximal promoter. Does not bind DNA. May act in a coactivator-like fashion through protein-protein interactions by contacting factors binding to the proximal MHC class II promoter, to elements of the transcription machinery, or both PubMed:8402893, PubMed:7749984,. Alternatively it may activate HLA class II transcription by modifying proteins that bind to the MHC class II promoter. Also mediates enhanced MHC class I transcription; the promoter element requirements for CIITA-mediated transcription are distinct from those of constitutive MHC class I transcription, and CIITA can functionally replace TAF1 at these genes. Activates CD74 transcription. Exhibits intrinsic GTP-stimulated acetyltransferase activity. Exhibits serine/threonine protein kinase activity: can phosphorylate the TFIID component TAF7, the RAP74 subunit of the general transcription factor TFIIF, histone H2B at 'Ser-37' and other histones (in vitro). Has antiviral activity against Ebola virus and coronaviruses, including SARS-CoV-2. Induces resistance by up-regulation of the p41 isoform of CD74, which blocks cathepsin-mediated cleavage of viral glycoproteins, thereby preventing viral fusion. In terms of biological role, exhibits dominant-negative suppression of MHC class II gene expression. The chain is MHC class II transactivator from Homo sapiens (Human).